The primary structure comprises 367 residues: Biotin synthase (367 aa).

The Radical SAM core domain maps to 67-291 (NAVQISTLLS…IAVTRICCPS (225 aa)). Cys82, Cys86, and Cys89 together coordinate [4Fe-4S] cluster. 4 residues coordinate [2Fe-2S] cluster: Cys128, Cys159, Cys219, and Arg295.

Belongs to the radical SAM superfamily. Biotin synthase family. In terms of assembly, homodimer. [4Fe-4S] cluster is required as a cofactor. The cofactor is [2Fe-2S] cluster.

The catalysed reaction is (4R,5S)-dethiobiotin + (sulfur carrier)-SH + 2 reduced [2Fe-2S]-[ferredoxin] + 2 S-adenosyl-L-methionine = (sulfur carrier)-H + biotin + 2 5'-deoxyadenosine + 2 L-methionine + 2 oxidized [2Fe-2S]-[ferredoxin]. The protein operates within cofactor biosynthesis; biotin biosynthesis; biotin from 7,8-diaminononanoate: step 2/2. In terms of biological role, catalyzes the conversion of dethiobiotin (DTB) to biotin by the insertion of a sulfur atom into dethiobiotin via a radical-based mechanism. This Psychrobacter sp. (strain PRwf-1) protein is Biotin synthase.